Consider the following 146-residue polypeptide: MSLHVTLRFTVALAAGLLFGFGLALSEMINPIRVLSFLNVASGHWNPSLLFVLGSALAVAFPGMALQRRLKRPLLDECFHLPSKKVIDRRIVFGSAIFGTGWGLTGLCPGPAIASLSTGLGPVLLFVAAMAAGMIIHDRIVVRCLS.

4 helical membrane passes run 9–29 (FTVALAAGLLFGFGLALSEMI), 46–66 (NPSLLFVLGSALAVAFPGMAL), 91–111 (IVFGSAIFGTGWGLTGLCPGP), and 116–136 (LSTGLGPVLLFVAAMAAGMII).

This sequence belongs to the TsuA/YedE (TC 9.B.102) family.

It localises to the cell inner membrane. The sequence is that of Probable transporter XF_0765 from Xylella fastidiosa (strain 9a5c).